Here is a 332-residue protein sequence, read N- to C-terminus: Endonuclease 8-like 2 (332 aa).

The active-site Schiff-base intermediate with DNA is Pro-2. Glu-3 acts as the Proton donor in catalysis. The active-site Proton donor; for beta-elimination activity is the Lys-50. Lys-50 carries the post-translational modification N6-acetyllysine. A disordered region spans residues 56–121 (FDPDEEMGPP…EDDSEYLERD (66 aa)). Phosphoserine is present on Ser-68. Residues 74–84 (PQKEAQKEGAA) are compositionally biased toward basic and acidic residues. Over residues 94-105 (GQKTPDGSSQSA) the composition is skewed to polar residues. Lys-154 carries the N6-acetyllysine modification. Residue Asn-231 participates in DNA binding. The FPG-type zinc-finger motif lies at 284 to 320 (QVYQREQCPAGHQVMKEAFGPQDGLQRLTWWCPQCQP). Residue Arg-310 is the Proton donor; for delta-elimination activity of the active site.

It belongs to the FPG family. As to quaternary structure, binds EP300.

It localises to the nucleus. It catalyses the reaction 2'-deoxyribonucleotide-(2'-deoxyribose 5'-phosphate)-2'-deoxyribonucleotide-DNA = a 3'-end 2'-deoxyribonucleotide-(2,3-dehydro-2,3-deoxyribose 5'-phosphate)-DNA + a 5'-end 5'-phospho-2'-deoxyribonucleoside-DNA + H(+). With respect to regulation, acetylation of Lys-50 leads to loss of DNA nicking activity. Involved in base excision repair of DNA damaged by oxidation or by mutagenic agents. Has DNA glycosylase activity towards 5-hydroxyuracil and other oxidized derivatives of cytosine with a preference for mismatched double-stranded DNA (DNA bubbles). Has low or no DNA glycosylase activity towards thymine glycol, 2-hydroxyadenine, hypoxanthine and 8-oxoguanine. Has AP (apurinic/apyrimidinic) lyase activity and introduces nicks in the DNA strand. Cleaves the DNA backbone by beta-delta elimination to generate a single-strand break at the site of the removed base with both 3'- and 5'-phosphates. In Pongo abelii (Sumatran orangutan), this protein is Endonuclease 8-like 2 (NEIL2).